A 251-amino-acid chain; its full sequence is Probable ATP-dependent transporter ycf16 (251 aa).

Residues 7–251 (LNIKNLDVTI…EKYGYDYLNK (245 aa)) form the ABC transporter domain. Residue 39–46 (GKNGSGKS) participates in ATP binding.

The protein belongs to the ABC transporter superfamily. Ycf16 family.

The protein localises to the plastid. The protein resides in the chloroplast. The chain is Probable ATP-dependent transporter ycf16 (ycf16) from Antithamnion sp. (Red alga).